Reading from the N-terminus, the 516-residue chain is Probable 2-methylcitrate dehydratase (516 aa).

It belongs to the PrpD family.

It carries out the reaction (2S,3S)-2-methylcitrate = 2-methyl-cis-aconitate + H2O. Its pathway is organic acid metabolism; propanoate degradation. Functionally, catalyzes the stereospecific dehydration of (2S,3S)-2-methylcitrate (2-MC) to yield the cis isomer of 2-methyl-aconitate. This is Probable 2-methylcitrate dehydratase (PDH1) from Saccharomyces cerevisiae (strain ATCC 204508 / S288c) (Baker's yeast).